Consider the following 177-residue polypeptide: NAD(P)H-quinone oxidoreductase subunit 6, chloroplastic (177 aa).

5 helical membrane passes run 10-30, 32-52, 61-81, 92-112, and 152-172; these read ILLV…VLLT, PIYS…FYIP, AQLL…VMFM, FWTV…FSLI, and FYLP…GAIA.

Belongs to the complex I subunit 6 family. In terms of assembly, NDH is composed of at least 16 different subunits, 5 of which are encoded in the nucleus.

It localises to the plastid. It is found in the chloroplast thylakoid membrane. The enzyme catalyses a plastoquinone + NADH + (n+1) H(+)(in) = a plastoquinol + NAD(+) + n H(+)(out). It carries out the reaction a plastoquinone + NADPH + (n+1) H(+)(in) = a plastoquinol + NADP(+) + n H(+)(out). Its function is as follows. NDH shuttles electrons from NAD(P)H:plastoquinone, via FMN and iron-sulfur (Fe-S) centers, to quinones in the photosynthetic chain and possibly in a chloroplast respiratory chain. The immediate electron acceptor for the enzyme in this species is believed to be plastoquinone. Couples the redox reaction to proton translocation, and thus conserves the redox energy in a proton gradient. The protein is NAD(P)H-quinone oxidoreductase subunit 6, chloroplastic (ndhG) of Nymphaea alba (White water-lily).